Here is an 84-residue protein sequence, read N- to C-terminus: Omega-theraphotoxin-Pm1a (84 aa).

The N-terminal stretch at 1–21 (MKTSMLAVFVALPLAFVLTAA) is a signal peptide. Residues 22-45 (TEERAHPNELVNSLVELVKLDAER) constitute a propeptide that is removed on maturation. Disulfide bonds link Cys52-Cys66, Cys59-Cys71, and Cys65-Cys78.

This sequence belongs to the neurotoxin 10 (Hwtx-1) family. 41 (Jztx-36) subfamily. Expressed by the venom gland.

The protein localises to the secreted. Its function is as follows. Omega-conotoxins act at presynaptic membranes, they bind and block voltage-gated calcium channels (Cav). This toxin inhibits barium currents (IBa) mediated by L-type voltage-gated calcium channels Cav1.2/CACNA1C (IC(50)=825 nM) and Cav1.3/CACNA1C (IC(50)=2240 nM). This chain is Omega-theraphotoxin-Pm1a, found in Pelinobius muticus (King baboon spider).